The primary structure comprises 267 residues: Tryptophan synthase alpha chain (267 aa).

Active-site proton acceptor residues include E47 and D58.

Belongs to the TrpA family. Tetramer of two alpha and two beta chains.

It carries out the reaction (1S,2R)-1-C-(indol-3-yl)glycerol 3-phosphate + L-serine = D-glyceraldehyde 3-phosphate + L-tryptophan + H2O. The protein operates within amino-acid biosynthesis; L-tryptophan biosynthesis; L-tryptophan from chorismate: step 5/5. Its function is as follows. The alpha subunit is responsible for the aldol cleavage of indoleglycerol phosphate to indole and glyceraldehyde 3-phosphate. The chain is Tryptophan synthase alpha chain from Prosthecochloris aestuarii (strain DSM 271 / SK 413).